We begin with the raw amino-acid sequence, 341 residues long: NADH-ubiquinone oxidoreductase chain 2 (341 aa).

10 helical membrane-spanning segments follow: residues 8–28 (ILFTTIMIIGTLITVTSNSWL), 61–81 (FLTQALASTVLLFSSILLMLA), 95–115 (MIIMSALLLKSGAAPFHFWFP), 121–141 (LTWMNALMLMTWQKIAPLMLI), 146–166 (IKNLLLISVILSVIIGAIGGL), 174–194 (LMAFSSINHLGWMLSSLMISE), 195–215 (SIWLIYFIFYSFLSFVLTFMF), 238–258 (FSLFMNFLSLGGLPPFLGFLP), 273–293 (FLLTLMMMSTLITLFFYLRIC), and 321–341 (LIMTFFSIFGLFLISLFFFML).

Belongs to the complex I subunit 2 family.

It localises to the mitochondrion inner membrane. The catalysed reaction is a ubiquinone + NADH + 5 H(+)(in) = a ubiquinol + NAD(+) + 4 H(+)(out). Its function is as follows. Core subunit of the mitochondrial membrane respiratory chain NADH dehydrogenase (Complex I) that is believed to belong to the minimal assembly required for catalysis. Complex I functions in the transfer of electrons from NADH to the respiratory chain. The immediate electron acceptor for the enzyme is believed to be ubiquinone. This Drosophila yakuba (Fruit fly) protein is NADH-ubiquinone oxidoreductase chain 2 (mt:ND2).